Here is a 159-residue protein sequence, read N- to C-terminus: Putative viral CXC chemokine 2 (159 aa).

2 cysteine pairs are disulfide-bonded: Cys-50/Cys-77 and Cys-52/Cys-93.

This sequence belongs to the intercrine alpha (chemokine CxC) family.

This is Putative viral CXC chemokine 2 (UL147) from Human cytomegalovirus (strain Towne) (HHV-5).